The sequence spans 384 residues: Probable inactive patatin-like protein 9 (384 aa).

The PNPLA domain maps to 33 to 234; the sequence is LSIDGGGTTG…VMNNPTAAAV (202 aa). A GXGXXG motif is present at residues 37 to 42; that stretch reads GGGTTG. Asp221 functions as the Proton acceptor in the catalytic mechanism. Residues 221–223 carry the DGA/G motif; sequence DGG. The segment at 363–384 is disordered; sequence GKSSLPPSPCKESAVNPLADGR.

The protein belongs to the patatin family. Highly expressed in roots and at lower levels in flowers and siliques.

This is Probable inactive patatin-like protein 9 (PLP9) from Arabidopsis thaliana (Mouse-ear cress).